Consider the following 31-residue polypeptide: Photosystem II reaction center protein T (31 aa).

Residues 3-23 (SFAYVLILTLAIATLFFAIAF) form a helical membrane-spanning segment.

Belongs to the PsbT family. As to quaternary structure, PSII is composed of 1 copy each of membrane proteins PsbA, PsbB, PsbC, PsbD, PsbE, PsbF, PsbH, PsbI, PsbJ, PsbK, PsbL, PsbM, PsbT, PsbX, PsbY, PsbZ, Psb30/Ycf12, peripheral proteins PsbO, CyanoQ (PsbQ), PsbU, PsbV and a large number of cofactors. It forms dimeric complexes.

Its subcellular location is the cellular thylakoid membrane. Functionally, found at the monomer-monomer interface of the photosystem II (PS II) dimer, plays a role in assembly and dimerization of PSII. PSII is a light-driven water plastoquinone oxidoreductase, using light energy to abstract electrons from H(2)O, generating a proton gradient subsequently used for ATP formation. This is Photosystem II reaction center protein T from Parasynechococcus marenigrum (strain WH8102).